Reading from the N-terminus, the 424-residue chain is Phosphomethylpyrimidine synthase (424 aa).

Substrate is bound by residues M94, Y123, H162, 184–186 (SRG), 225–228 (NGMR), and E264. Position 268 (H268) interacts with Zn(2+). Y291 is a substrate binding site. Position 332 (H332) interacts with Zn(2+). Residues C406, C409, and C413 each contribute to the [4Fe-4S] cluster site.

Belongs to the ThiC family. [4Fe-4S] cluster serves as cofactor.

It catalyses the reaction 5-amino-1-(5-phospho-beta-D-ribosyl)imidazole + S-adenosyl-L-methionine = 4-amino-2-methyl-5-(phosphooxymethyl)pyrimidine + CO + 5'-deoxyadenosine + formate + L-methionine + 3 H(+). The protein operates within cofactor biosynthesis; thiamine diphosphate biosynthesis. Catalyzes the synthesis of the hydroxymethylpyrimidine phosphate (HMP-P) moiety of thiamine from aminoimidazole ribotide (AIR) in a radical S-adenosyl-L-methionine (SAM)-dependent reaction. The sequence is that of Phosphomethylpyrimidine synthase from Methanoculleus marisnigri (strain ATCC 35101 / DSM 1498 / JR1).